A 476-amino-acid polypeptide reads, in one-letter code: Thymidine phosphorylase (476 aa).

Residues 1-11 show a composition bias toward pro residues; it reads MAAPGTPPPLA. Residues 1 to 26 form a disordered region; sequence MAAPGTPPPLAPETAGADSGGGSGEH. Thr6 and Thr475 each carry phosphothreonine.

Belongs to the thymidine/pyrimidine-nucleoside phosphorylase family. In terms of assembly, homodimer.

The enzyme catalyses thymidine + phosphate = 2-deoxy-alpha-D-ribose 1-phosphate + thymine. It participates in pyrimidine metabolism; dTMP biosynthesis via salvage pathway; dTMP from thymine: step 1/2. Functionally, catalyzes the reversible phosphorolysis of thymidine. The produced molecules are then utilized as carbon and energy sources or in the rescue of pyrimidine bases for nucleotide synthesis. This chain is Thymidine phosphorylase (Tymp), found in Rattus norvegicus (Rat).